A 357-amino-acid chain; its full sequence is A-type ATP synthase subunit C (357 aa).

Belongs to the V-ATPase V0D/AC39 subunit family. In terms of assembly, has multiple subunits with at least A(3), B(3), C, D, E, F, H, I and proteolipid K(x).

The protein localises to the cell membrane. Functionally, component of the A-type ATP synthase that produces ATP from ADP in the presence of a proton gradient across the membrane. The protein is A-type ATP synthase subunit C of Methanococcoides burtonii (strain DSM 6242 / NBRC 107633 / OCM 468 / ACE-M).